We begin with the raw amino-acid sequence, 132 residues long: MSGKGKVHGGKGKSSEAAKSSTSHSARAGLQFPVGRIKRYLKRTAQNKIRVGSKSAIYLTAVLEYLTAEVLELAGNAAKDLKVKRITPRHLQLAIRGDEELDNLIKATIAYGGVLPHINKALLLKVEKKKQK.

A compositionally biased stretch (basic residues) spans 1–11 (MSGKGKVHGGK). Residues 1-30 (MSGKGKVHGGKGKSSEAAKSSTSHSARAGL) form a disordered region. S2 bears the N-acetylserine mark. N6-acetyllysine occurs at positions 4, 11, and 13. The span at 15–26 (SEAAKSSTSHSA) shows a compositional bias: low complexity.

This sequence belongs to the histone H2A family. In terms of assembly, the nucleosome is a histone octamer containing two molecules each of H2A, H2B, H3 and H4 assembled in one H3-H4 heterotetramer and two H2A-H2B heterodimers. The octamer wraps approximately 147 bp of DNA. H2A or its variant H2A.Z forms a heterodimer with H2B. H2A.Z associates with the VPS72/SWC2 subunit of the SWR1 chromatin remodeling complex. Also interacts with RBP1/DNA-directed RNA polymerase II largest subunit. Acetylated once deposited into chromatin.

It localises to the nucleus. The protein resides in the chromosome. Its function is as follows. Variant histone H2A which can replace H2A in some nucleosomes. Nucleosomes wrap and compact DNA into chromatin, limiting DNA accessibility to the cellular machineries which require DNA as a template. Histones thereby play a central role in transcription regulation, DNA repair, DNA replication and chromosomal stability. DNA accessibility is regulated via a complex set of post-translational modifications of histones, also called histone code, and nucleosome remodeling. This variant is enriched at promoters, it may keep them in a repressed state until the appropriate activation signal is received. Near telomeres, it may counteract gene silencing caused by the spread of heterochromatin proteins. Required for the RNA polymerase II and SPT15/TBP recruitment to the target genes. Involved in chromosome stability. This Scheffersomyces stipitis (strain ATCC 58785 / CBS 6054 / NBRC 10063 / NRRL Y-11545) (Yeast) protein is Histone H2A.Z (HTZ1).